A 1482-amino-acid polypeptide reads, in one-letter code: Cystic fibrosis transmembrane conductance regulator (1482 aa).

The Cytoplasmic portion of the chain corresponds to 1-77 (MQRSPLEKAS…KLINALQRCF (77 aa)). Residues 78–98 (FWRFTFYGILLYLGEVTKAIQ) traverse the membrane as a helical segment. In terms of domain architecture, ABC transmembrane type-1 1 spans 81–365 (FTFYGILLYL…WAVQTWYDSL (285 aa)). Residues 99–122 (PLLLGRIIASYDPDNKMERSIAIY) are Extracellular-facing. A helical membrane pass occupies residues 123–146 (LGIGLCLLFIMRTLLLHPAIFGLH). Residues 147–195 (HIGMQMRIALFSLIYKKTLKLSSRVLDKISIGQLVSLLSNNLNKFDEGL) lie on the Cytoplasmic side of the membrane. Residues 196–216 (ALAHFVWIAPLQVMLLMGLLW) form a helical membrane-spanning segment. Topologically, residues 217–222 (ELLQAS) are extracellular. A helical membrane pass occupies residues 223 to 243 (AFCGLAFLIVLALLQAGLGRM). Residues 244 to 298 (MMKYRDQRAGKINERLVITSEMIENIQSVKAYCWEEAMEKMIENLRQTELRLTRK) are Cytoplasmic-facing. The helical transmembrane segment at 299-319 (AAYVRYVNSSAFFFSGFFVVF) threads the bilayer. Over 320-339 (LSVLPYALIKGIILRKIFTT) the chain is Extracellular. The chain crosses the membrane as a helical span at residues 340 to 358 (ISFCIVLRMAVTRQFPWAV). Over 359–859 (QTWYDSLGAI…YLRYITVHKN (501 aa)) the chain is Cytoplasmic. Residues Trp-401, 458–465 (GSTGAGKT), and Gln-493 contribute to the ATP site. The 224-residue stretch at 423–646 (SGDNRLFFSN…RPDFSSKLMG (224 aa)) folds into the ABC transporter 1 domain. A lipid anchor (S-palmitoyl cysteine) is attached at Cys-524. A phosphoserine mark is found at Ser-549 and Ser-660. The interval 654-832 (SAERRNSILT…EEINEEDLKE (179 aa)) is disordered R region. Ser-670 is subject to Phosphoserine; by PKA. Ser-686 is subject to Phosphoserine. Lys-688 participates in a covalent cross-link: Glycyl lysine isopeptide (Lys-Gly) (interchain with G-Cter in ubiquitin). 2 positions are modified to phosphoserine: Ser-700 and Ser-712. Residue Thr-717 is modified to Phosphothreonine. Residues Ser-737, Ser-768, Ser-791, Ser-796, and Ser-814 each carry the phosphoserine modification. Residues 860–880 (LIFVLIWCLVIFLAEVAASLV) form a helical membrane-spanning segment. In terms of domain architecture, ABC transmembrane type-1 2 spans 860 to 1156 (LIFVLIWCLV…AVNSSIDVDS (297 aa)). At 881-919 (AFWLIEKTRPQDKGNSTRSTNNTSPVIITSTSAFYMFYI) the chain is on the extracellular side. Asn-895 and Asn-901 each carry an N-linked (GlcNAc...) asparagine glycan. Residues 920–940 (YVGVADSLLALGFLRGLPLVH) traverse the membrane as a discontinuously helical segment. The Cytoplasmic segment spans residues 941–991 (TLITVSKILHQKMLHSVLHAPMSTLNTLKAGAILNRFSKDIAILDDLLPLT). A helical transmembrane segment spans residues 992 to 1012 (IFDFIQLVLIVIGAVVVVSIL). Residues 1013-1014 (KP) are Extracellular-facing. A helical membrane pass occupies residues 1015–1035 (YIFLAAVPVIIAFVILRAYFL). Topologically, residues 1036 to 1096 (QTSQQLKQLE…TATWFLYLST (61 aa)) are cytoplasmic. The chain crosses the membrane as a helical span at residues 1097–1117 (LRWFQMRIEMIFVVFFVAVTF). At 1118–1131 (ISILTTGEGEGTVG) the chain is on the extracellular side. Residues 1132 to 1152 (IILTLAMNIMSTLQWAVNSSI) form a helical membrane-spanning segment. The Cytoplasmic portion of the chain corresponds to 1153 to 1482 (DVDSLMRSVS…AEEEVQDTRL (330 aa)). One can recognise an ABC transporter 2 domain in the interval 1212 to 1445 (ITVKDLTAKY…KSLFQQAISP (234 aa)). ATP-binding positions include Tyr-1221 and 1246–1253 (GRTGSGKS). Positions 1388-1482 (RALKQAFADC…AEEEVQDTRL (95 aa)) are interaction with GORASP2. Residue Cys-1397 is the site of S-palmitoyl cysteine attachment. Phosphoserine occurs at positions 1446 and 1458. The segment at 1454 to 1482 (QRSSSKHRSRAQITALKEEAEEEVQDTRL) is disordered. Residues 1472 to 1482 (EAEEEVQDTRL) show a composition bias toward acidic residues. A PDZ-binding motif is present at residues 1480–1482 (TRL).

The protein belongs to the ABC transporter superfamily. ABCC family. CFTR transporter (TC 3.A.1.202) subfamily. In terms of assembly, monomer; does not require oligomerization for channel activity. May form oligomers in the membrane. Interacts with SLC26A3, SLC26A6 and NHERF1. Interacts with SHANK2. Interacts with MYO6. Interacts (via C-terminus) with GOPC (via PDZ domain); this promotes CFTR internalization and thereby decreases channel activity. Interacts with SLC4A7 through NHERF1. Found in a complex with MYO5B and RAB11A. Interacts with ANO1. Interacts with SLC26A8. Interacts with AHCYL1; the interaction increases CFTR activity. Interacts with CSE1L. The core-glycosylated form interacts with GORASP2 (via PDZ GRASP-type 1 domain) in respone to ER stress. Interacts with MARCHF2; the interaction leads to CFTR ubiqtuitination and degradation. Interacts with ADGRG2. N-glycosylated. Post-translationally, phosphorylated; cAMP treatment promotes phosphorylation and activates the channel. Dephosphorylation decreases the ATPase activity (in vitro). Phosphorylation at PKA sites activates the channel. Phosphorylation at PKC sites enhances the response to phosphorylation by PKA. Phosphorylated by AMPK; this inhibits channel activity. In terms of processing, ubiquitinated, leading to its degradation in the lysosome. Deubiquitination by USP10 in early endosomes enhances its endocytic recycling to the cell membrane. Ubiquitinated by RNF185 during ER stress. Ubiquitinated by MARCHF2.

The protein localises to the apical cell membrane. The protein resides in the early endosome membrane. Its subcellular location is the cell membrane. It is found in the recycling endosome membrane. It localises to the endoplasmic reticulum membrane. The protein localises to the nucleus. It carries out the reaction ATP + H2O + closed Cl(-) channel = ADP + phosphate + open Cl(-) channel.. The catalysed reaction is chloride(in) = chloride(out). It catalyses the reaction hydrogencarbonate(in) = hydrogencarbonate(out). The enzyme catalyses ATP + H2O = ADP + phosphate + H(+). Its function is as follows. Epithelial ion channel that plays an important role in the regulation of epithelial ion and water transport and fluid homeostasis. Mediates the transport of chloride ions across the cell membrane. Possesses an intrinsic ATPase activity and utilizes ATP to gate its channel; the passive flow of anions through the channel is gated by cycles of ATP binding and hydrolysis by the ATP-binding domains. The ion channel is also permeable to HCO(3)(-); selectivity depends on the extracellular chloride concentration. Exerts its function also by modulating the activity of other ion channels and transporters. Contributes to the regulation of the pH and the ion content of the epithelial fluid layer. Modulates the activity of the epithelial sodium channel (ENaC) complex, in part by regulating the cell surface expression of the ENaC complex. May regulate bicarbonate secretion and salvage in epithelial cells by regulating the transporter SLC4A7. Can inhibit the chloride channel activity of ANO1. Plays a role in the chloride and bicarbonate homeostasis during sperm epididymal maturation and capacitation. This chain is Cystic fibrosis transmembrane conductance regulator, found in Rhinolophus ferrumequinum (Greater horseshoe bat).